Here is a 541-residue protein sequence, read N- to C-terminus: T-complex protein 1 subunit epsilon (541 aa).

N-acetylalanine is present on alanine 2. Lysine 20 is covalently cross-linked (Glycyl lysine isopeptide (Lys-Gly) (interchain with G-Cter in SUMO2)). Serine 26 carries the post-translational modification Phosphoserine. Residue glycine 53 participates in ADP binding. Glycine 53 contributes to the ATP binding site. Residue aspartate 104 coordinates Mg(2+). Glycine 105, threonine 106, threonine 107, and serine 175 together coordinate ADP. Threonine 106 and threonine 107 together coordinate ATP. Glycyl lysine isopeptide (Lys-Gly) (interchain with G-Cter in SUMO2) cross-links involve residues lysine 210, lysine 214, lysine 265, lysine 275, and lysine 279. Serine 346 carries the phosphoserine modification. Lysine 392 is covalently cross-linked (Glycyl lysine isopeptide (Lys-Gly) (interchain with G-Cter in SUMO2)). The ADP site is built by glycine 422, aspartate 492, glutamate 508, and lysine 513. Residue glycine 422 coordinates ATP. Serine 539 carries the phosphoserine modification.

Belongs to the TCP-1 chaperonin family. As to quaternary structure, component of the chaperonin-containing T-complex (TRiC), a hexadecamer composed of two identical back-to-back stacked rings enclosing a protein folding chamber. Each ring is made up of eight different subunits: TCP1/CCT1, CCT2, CCT3, CCT4, CCT5, CCT6A/CCT6, CCT7, CCT8. Interacts with PACRG. Interacts with DNAAF4. Interacts with DLEC1. Interacts with SPMAP2. Ubiquitinated by the DCX(DCAF12) complex specifically recognizes the diglutamate (Glu-Glu) at the C-terminus, leading to its degradation.

It localises to the cytoplasm. It is found in the cytoskeleton. The protein localises to the microtubule organizing center. Its subcellular location is the centrosome. It catalyses the reaction ATP + H2O = ADP + phosphate + H(+). In terms of biological role, component of the chaperonin-containing T-complex (TRiC), a molecular chaperone complex that assists the folding of actin, tubulin and other proteins upon ATP hydrolysis. The TRiC complex mediates the folding of WRAP53/TCAB1, thereby regulating telomere maintenance. As part of the TRiC complex may play a role in the assembly of BBSome, a complex involved in ciliogenesis regulating transports vesicles to the cilia. The sequence is that of T-complex protein 1 subunit epsilon (Cct5) from Rattus norvegicus (Rat).